A 494-amino-acid chain; its full sequence is Aldehyde dehydrogenase (494 aa).

223–228 contacts NAD(+); it reads GSTTAG. Catalysis depends on residues Glu245 and Cys279.

It belongs to the aldehyde dehydrogenase family.

The catalysed reaction is an aldehyde + NAD(+) + H2O = a carboxylate + NADH + 2 H(+). Its pathway is mycotoxin biosynthesis. Functionally, aldehyde dehydrogenase; part of the gene cluster that mediates the biosynthesis of the selective antifungal agent ascochitine, an o-quinone methide that plays a possible protective role against other microbial competitors in nature and is considered to be important for pathogenicity of legume-associated Didymella species. The pathway probably begins with the synthesis of a keto-aldehyde intermediate by the ascochitine non-reducing polyketide synthase pksAC from successive condensations of 4 malonyl-CoA units, presumably with a simple acetyl-CoA starter unit. Release of the keto-aldehyde intermediate is consistent with the presence of the C-terminal reductive release domain. The HR-PKS (orf7) probably makes a diketide starter unit which is passed to the non-reducing polyketide synthase pksAC for further extension, producing ascochital and ascochitine. The aldehyde dehydrogenase (orf1), the 2-oxoglutarate-dependent dioxygenase (orf3) and the dehydrogenase (orf9) are probably involved in subsequent oxidations of methyl groups to the carboxylic acid of the heterocyclic ring. The ascochitine gene cluster also includes a gene encoding a short peptide with a cupin domain (orf2) that is often found in secondary metabolite gene clusters and which function has still to be determined. The chain is Aldehyde dehydrogenase from Didymella fabae (Leaf and pod spot disease fungus).